Consider the following 208-residue polypeptide: Ras-related protein Rab-6B (208 aa).

GTP contacts are provided by residues 20-27, T45, 68-72, and 126-129; these read GEQSVGKT, DTAGQ, and NKTD. The Effector region signature appears at 42–50; sequence YQATIGIDF. Residues C206 and C208 are each lipidated (S-geranylgeranyl cysteine). Position 208 is a cysteine methyl ester (C208).

It belongs to the small GTPase superfamily. Rab family. As to quaternary structure, interacts (GTP-bound) with BICD1 (via C-terminus); the interaction is direct. Interacts (GDP-bound) with DYNLRB1. Interacts (GTP-bound) with APBA1/MINT1. Interacts (GTP-bound) with VPS13B.

It localises to the golgi apparatus membrane. It is found in the endoplasmic reticulum-Golgi intermediate compartment. The protein resides in the cytoplasmic vesicle. The catalysed reaction is GTP + H2O = GDP + phosphate + H(+). With respect to regulation, regulated by guanine nucleotide exchange factors (GEFs) which promote the exchange of bound GDP for free GTP, GTPase activating proteins (GAPs) which increase the GTP hydrolysis activity, and GDP dissociation inhibitors which inhibit the dissociation of the nucleotide from the GTPase. Functionally, the small GTPases Rab are key regulators of intracellular membrane trafficking, from the formation of transport vesicles to their fusion with membranes. Rabs cycle between active GTP-bound and inactive GDP-bound states. In their active state, drive transport of vesicular carriers from donor organelles to acceptor organelles to regulate the membrane traffic that maintains organelle identity and morphology. Recruits VPS13B to the Golgi membrane. Regulates the compacted morphology of the Golgi. Seems to have a role in retrograde membrane traffic at the level of the Golgi complex. May function in retrograde transport in neuronal cells. Plays a role in neuron projection development. This chain is Ras-related protein Rab-6B (RAB6B), found in Bos taurus (Bovine).